The primary structure comprises 679 residues: Stress-70 protein, mitochondrial (679 aa).

Residues 1 to 46 (MISASRAAAARLVGAAASRGPTAARHQDSWNGLSHEAFRLVSRRDY) constitute a mitochondrion transit peptide. Positions 1–432 (MISASRAAAA…IQGGVLAGDV (432 aa)) are interaction with NFS1. ADP contacts are provided by Thr-63 and Asn-64. Residues 63–431 (TNSCVAVMEG…AIQGGVLAGD (369 aa)) are nucleotide-binding domain (NBD). Position 76 is an N6-acetyllysine (Lys-76). Residue Thr-87 is modified to Phosphothreonine. N6-acetyllysine; alternate is present on residues Lys-135 and Lys-138. N6-succinyllysine; alternate occurs at positions 135 and 138. Position 143 is an N6-acetyllysine (Lys-143). N6-acetyllysine; alternate is present on Lys-206. At Lys-206 the chain carries N6-succinyllysine; alternate. Lys-206 carries the N6-malonyllysine; alternate modification. An N6-acetyllysine mark is found at Lys-234 and Lys-288. Lys-300 carries the N6-acetyllysine; alternate modification. Lys-300 is subject to N6-succinyllysine; alternate. Residues Glu-313, Lys-316, and Ser-320 each contribute to the ADP site. Lys-368 carries the post-translational modification N6-succinyllysine. Residues Gly-388 and Arg-391 each coordinate ADP. Lys-394 carries the N6-succinyllysine modification. Position 408 is a phosphoserine (Ser-408). Residues 432 to 441 (VTDVLLLDVT) are interdomain linker. The tract at residues 432–679 (VTDVLLLDVT…QKEDQKEEKQ (248 aa)) is interaction with FXN and ISCU. A substrate-binding domain (SBD) region spans residues 442 to 679 (PLSLGIETLG…QKEDQKEEKQ (238 aa)). Arg-513 is modified (omega-N-methylarginine). Residues Lys-567 and Lys-600 each carry the N6-acetyllysine; alternate modification. 2 positions are modified to N6-succinyllysine; alternate: Lys-567 and Lys-600. N6-succinyllysine is present on Lys-610. N6-acetyllysine is present on Lys-612. An N6-acetyllysine; alternate modification is found at Lys-646. At Lys-646 the chain carries N6-succinyllysine; alternate. Residues 656–679 (ASEREGSGSSGTGEQKEDQKEEKQ) are disordered. Residues 669-679 (EQKEDQKEEKQ) show a composition bias toward basic and acidic residues.

The protein belongs to the heat shock protein 70 family. In terms of assembly, interacts strongly with the intermediate form of FXN and weakly with its mature form. Interacts with HSCB. Associates with the mitochondrial contact site and cristae organizing system (MICOS) complex, composed of at least MICOS10/MIC10, CHCHD3/MIC19, CHCHD6/MIC25, APOOL/MIC27, IMMT/MIC60, APOO/MIC23/MIC26 and QIL1/MIC13. This complex was also known under the names MINOS or MitOS complex. The MICOS complex associates with mitochondrial outer membrane proteins SAMM50, MTX1, MTX2 and DNAJC11, mitochondrial inner membrane protein TMEM11 and with HSPA9. Interacts with DNLZ, the interaction is required to prevent self-aggregation. Interacts with TESPA1. Interacts with PDPN. Interacts with NFU1, NFS1 and ISCU. Interacts with TP53; the interaction promotes TP53 degradation. Interacts (via SBD domain) with UBXN2A; the interaction with UBXN2A inhibits HSPA9 interaction with and degradation of TP53, thereby promotes TP53 translocation to the nucleus. Interacts with ITPR1 AND VDAC1; this interaction couples ITPR1 to VDAC1. Component of the TIM23 mitochondrial inner membrane pre-sequence translocase complex.

Its subcellular location is the mitochondrion. The protein localises to the nucleus. It is found in the nucleolus. The protein resides in the cytoplasm. It localises to the mitochondrion matrix. It carries out the reaction ATP + H2O = ADP + phosphate + H(+). Its activity is regulated as follows. The chaperone activity is regulated by ATP-induced allosteric coupling of the nucleotide-binding (NBD) and substrate-binding (SBD) domains. ATP binding in the NBD leads to a conformational change in the NBD, which is transferred through the interdomain linker (IDL) to the substrate-binding domain (SBD). This elicits a reduced substrate affinity and a faster substrate exchange rate. Upon hydrolysis of ATP to ADP, the protein undergoes a conformational change that increases its affinity for substrate proteins. It cycles through repeated phases of ATP hydrolysis and nucleotide exchange, facilitating repeated cycles of substrate binding and release. Functions in collaboration with co-chaperones. Functions with the co-chaperone, DNLZ, to maintain solubility and regulate ATP hydrolysis. Nucleotide exchange factors, GRPEL1 and GRPEL2, accelerate nucleotide exchange. Its function is as follows. Mitochondrial chaperone that plays a key role in mitochondrial protein import, folding, and assembly. Plays an essential role in the protein quality control system, the correct folding of proteins, the re-folding of misfolded proteins, and the targeting of proteins for subsequent degradation. These processes are achieved through cycles of ATP binding, ATP hydrolysis, and ADP release, mediated by co-chaperones. In mitochondria, it associates with the TIM (translocase of the inner membrane) protein complex to assist in the import and folding of mitochondrial proteins. Plays an important role in mitochondrial iron-sulfur cluster (ISC) biogenesis, interacts with and stabilizes ISC cluster assembly proteins FXN, NFU1, NFS1 and ISCU. Regulates erythropoiesis via stabilization of ISC assembly. Regulates mitochondrial calcium-dependent apoptosis by coupling two calcium channels, ITPR1 and VDAC1, at the mitochondria-associated endoplasmic reticulum (ER) membrane to facilitate calcium transport from the ER lumen to the mitochondria intermembrane space, providing calcium for the downstream calcium channel MCU, which releases it into the mitochondrial matrix. Although primarily located in the mitochondria, it is also found in other cellular compartments. In the cytosol, it associates with proteins involved in signaling, apoptosis, or senescence. It may play a role in cell cycle regulation via its interaction with and promotion of degradation of TP53. May play a role in the control of cell proliferation and cellular aging. Protects against reactive oxygen species (ROS). Extracellular HSPA9 plays a cytoprotective role by preventing cell lysis following immune attack by the membrane attack complex by disrupting formation of the complex. This chain is Stress-70 protein, mitochondrial, found in Homo sapiens (Human).